Here is a 242-residue protein sequence, read N- to C-terminus: MLPSMMVARPDPQTTSSSSHRGLLIVMTGASGVGKGTLRERWLAGQDVFYSTSWTTREARPGERDGVDYVFVTPEVFLEKVRQNGFLEHAQFVGNHYGTPTEPIEAALARGQDVVLEIEVEGAMQVKERMGEEAVLVFIMPPSLTELRRRLTGRATETPERIEKRLQRARDEIMAAHAFRYVIVNDDLDRAVRELQAVQRAEHARQRPETEWTAEDRAAVQLAETVRSTVLTTEDLQRIVNS.

A Guanylate kinase-like domain is found at 22–200 (GLLIVMTGAS…AVRELQAVQR (179 aa)). 29 to 36 (GASGVGKG) serves as a coordination point for ATP.

It belongs to the guanylate kinase family.

It is found in the cytoplasm. The enzyme catalyses GMP + ATP = GDP + ADP. Functionally, essential for recycling GMP and indirectly, cGMP. The polypeptide is Guanylate kinase (Deinococcus geothermalis (strain DSM 11300 / CIP 105573 / AG-3a)).